We begin with the raw amino-acid sequence, 81 residues long: Acyl carrier protein (81 aa).

Residues 2-77 form the Carrier domain; sequence ASVEEKVKQI…DAVDYITAHA (76 aa). S37 is modified (O-(pantetheine 4'-phosphoryl)serine).

Belongs to the acyl carrier protein (ACP) family. In terms of processing, 4'-phosphopantetheine is transferred from CoA to a specific serine of apo-ACP by AcpS. This modification is essential for activity because fatty acids are bound in thioester linkage to the sulfhydryl of the prosthetic group.

Its subcellular location is the cytoplasm. It functions in the pathway lipid metabolism; fatty acid biosynthesis. Carrier of the growing fatty acid chain in fatty acid biosynthesis. The chain is Acyl carrier protein from Koribacter versatilis (strain Ellin345).